Here is a 172-residue protein sequence, read N- to C-terminus: Translation initiation factor IF-3 (172 aa).

Belongs to the IF-3 family. Monomer.

The protein resides in the cytoplasm. IF-3 binds to the 30S ribosomal subunit and shifts the equilibrium between 70S ribosomes and their 50S and 30S subunits in favor of the free subunits, thus enhancing the availability of 30S subunits on which protein synthesis initiation begins. The polypeptide is Translation initiation factor IF-3 (Bartonella tribocorum (strain CIP 105476 / IBS 506)).